Here is a 312-residue protein sequence, read N- to C-terminus: DNA-directed RNA polymerase subunit alpha (312 aa).

The segment at 1–226 (MIEFEKPKIT…DHLNLFVDLS (226 aa)) is alpha N-terminal domain (alpha-NTD). The tract at residues 243-312 (TERVLDKIIE…ELGLSLKKRK (70 aa)) is alpha C-terminal domain (alpha-CTD).

Belongs to the RNA polymerase alpha chain family. As to quaternary structure, homodimer. The RNAP catalytic core consists of 2 alpha, 1 beta, 1 beta' and 1 omega subunit. When a sigma factor is associated with the core the holoenzyme is formed, which can initiate transcription.

It catalyses the reaction RNA(n) + a ribonucleoside 5'-triphosphate = RNA(n+1) + diphosphate. DNA-dependent RNA polymerase catalyzes the transcription of DNA into RNA using the four ribonucleoside triphosphates as substrates. The chain is DNA-directed RNA polymerase subunit alpha from Lactococcus lactis subsp. lactis (strain IL1403) (Streptococcus lactis).